A 115-amino-acid polypeptide reads, in one-letter code: NADH-ubiquinone oxidoreductase chain 3 (115 aa).

Transmembrane regions (helical) follow at residues 4–24, 55–75, and 84–104; these read LMIL…AFWL, FFLV…LLPL, and INMM…GLAY.

Belongs to the complex I subunit 3 family. As to quaternary structure, core subunit of respiratory chain NADH dehydrogenase (Complex I) which is composed of 45 different subunits. Interacts with TMEM186. Interacts with TMEM242.

It localises to the mitochondrion inner membrane. The catalysed reaction is a ubiquinone + NADH + 5 H(+)(in) = a ubiquinol + NAD(+) + 4 H(+)(out). Functionally, core subunit of the mitochondrial membrane respiratory chain NADH dehydrogenase (Complex I) which catalyzes electron transfer from NADH through the respiratory chain, using ubiquinone as an electron acceptor. Essential for the catalytic activity of complex I. The polypeptide is NADH-ubiquinone oxidoreductase chain 3 (Podomys floridanus (Florida mouse)).